The sequence spans 284 residues: 4-hydroxybenzoate octaprenyltransferase (284 aa).

The next 7 membrane-spanning stretches (helical) occupy residues 13–32 (FNRPIGSFLLMWPTLWALWL), 90–110 (ALMLFCALSILSFILVLFTDL), 112–132 (TILLSFVGLGLAALYPFMKRY), 134–154 (HLPQLFLGLAFSWAIPMAYSA), 164–184 (LWMLFVANCFWTIAYDTYYAM), 200–220 (ILFGQYDLFVIICLQGLTLSL), and 224–244 (IGLLAGLHWLYFVSLIVCVGL).

The protein belongs to the UbiA prenyltransferase family. Mg(2+) serves as cofactor.

It is found in the cell inner membrane. It carries out the reaction all-trans-octaprenyl diphosphate + 4-hydroxybenzoate = 4-hydroxy-3-(all-trans-octaprenyl)benzoate + diphosphate. It functions in the pathway cofactor biosynthesis; ubiquinone biosynthesis. In terms of biological role, catalyzes the prenylation of para-hydroxybenzoate (PHB) with an all-trans polyprenyl group. Mediates the second step in the final reaction sequence of ubiquinone-8 (UQ-8) biosynthesis, which is the condensation of the polyisoprenoid side chain with PHB, generating the first membrane-bound Q intermediate 3-octaprenyl-4-hydroxybenzoate. This chain is 4-hydroxybenzoate octaprenyltransferase, found in Marinomonas sp. (strain MWYL1).